A 602-amino-acid chain; its full sequence is Probable translation initiation factor IF-2 (602 aa).

A tr-type G domain is found at 10–227; that stretch reads LRQPIVVVLG…LLAGLTQNYM (218 aa). Residues 19–26 form a G1 region; that stretch reads GHVDHGKT. 19–26 contacts GTP; that stretch reads GHVDHGKT. Residues 44 to 48 are G2; sequence EMTQE. The interval 83-86 is G3; sequence DTPG. Residues 83-87 and 137-140 each bind GTP; these read DTPGH and NKID. The G4 stretch occupies residues 137-140; it reads NKID. The tract at residues 205–207 is G5; the sequence is SAK.

This sequence belongs to the TRAFAC class translation factor GTPase superfamily. Classic translation factor GTPase family. IF-2 subfamily.

Function in general translation initiation by promoting the binding of the formylmethionine-tRNA to ribosomes. Seems to function along with eIF-2. The chain is Probable translation initiation factor IF-2 from Sulfurisphaera tokodaii (strain DSM 16993 / JCM 10545 / NBRC 100140 / 7) (Sulfolobus tokodaii).